We begin with the raw amino-acid sequence, 348 residues long: Tocopherol O-methyltransferase, chloroplastic (348 aa).

The transit peptide at 1–51 (MKATLAAPSSLTSLPYRTNSSFGSKSSLLFRSPSSSSSVSMTTTRGNVAVA) directs the protein to the chloroplast. At Ala52 the chain carries N-acetylalanine. Residues 130–139 (VVDVGCGIGG) are SAM motif I. The tract at residues 193–201 (GKFDLVWSM) is SAM motif II. An SAM motif III region spans residues 220-229 (VAAPGGRIII).

The protein belongs to the class I-like SAM-binding methyltransferase superfamily. gTMT family.

It localises to the plastid. It is found in the chloroplast. It carries out the reaction gamma-tocopherol + S-adenosyl-L-methionine = (+)-alpha-tocopherol + S-adenosyl-L-homocysteine + H(+). The catalysed reaction is delta-tocotrienol + S-adenosyl-L-methionine = beta-tocotrienol + S-adenosyl-L-homocysteine + H(+). It catalyses the reaction gamma-tocotrienol + S-adenosyl-L-methionine = alpha-tocotrienol + S-adenosyl-L-homocysteine + H(+). The enzyme catalyses delta-tocopherol + S-adenosyl-L-methionine = beta-tocopherol + S-adenosyl-L-homocysteine + H(+). It participates in cofactor biosynthesis; tocopherol biosynthesis. Involved in the synthesis of tocopherol (vitamin E). Methylates gamma- and delta-tocopherol to form beta- and alpha-tocopherol, respectively. The sequence is that of Tocopherol O-methyltransferase, chloroplastic (VTE4) from Arabidopsis thaliana (Mouse-ear cress).